The chain runs to 509 residues: Bifunctional purine biosynthesis protein PurH (509 aa).

Residues 1–144 (MKRALLSVSD…KNARDVIVVV (144 aa)) enclose the MGS-like domain.

The protein belongs to the PurH family.

It catalyses the reaction (6R)-10-formyltetrahydrofolate + 5-amino-1-(5-phospho-beta-D-ribosyl)imidazole-4-carboxamide = 5-formamido-1-(5-phospho-D-ribosyl)imidazole-4-carboxamide + (6S)-5,6,7,8-tetrahydrofolate. It carries out the reaction IMP + H2O = 5-formamido-1-(5-phospho-D-ribosyl)imidazole-4-carboxamide. Its pathway is purine metabolism; IMP biosynthesis via de novo pathway; 5-formamido-1-(5-phospho-D-ribosyl)imidazole-4-carboxamide from 5-amino-1-(5-phospho-D-ribosyl)imidazole-4-carboxamide (10-formyl THF route): step 1/1. The protein operates within purine metabolism; IMP biosynthesis via de novo pathway; IMP from 5-formamido-1-(5-phospho-D-ribosyl)imidazole-4-carboxamide: step 1/1. This chain is Bifunctional purine biosynthesis protein PurH, found in Oenococcus oeni (strain ATCC BAA-331 / PSU-1).